Reading from the N-terminus, the 637-residue chain is Transcription factor GLABRA 3 (637 aa).

Residues 437–486 (DETGNHAVLEKKRREKLNERFMTLRKIIPSINKIDKVSILDDTIEYLQEL) form the bHLH domain. The interval 497-521 (RESTDTETRGTMTMKRKKPCDAGER) is disordered. The tract at residues 541 to 637 (NVGEAEPADT…EALQRVAWIC (97 aa)) is binding with MYB0/GL1 and MYB23.

Efficient DNA binding requires dimerization with another bHLH protein. Homodimer and heterodimer with BHLH2. Interacts directly with TTG1 and MYB0/GL1 to form a complex. Its interaction with TRY prevents MYB0/GL1 binding. Interacts with MYB75/PAP1, MYB90/PAP2, TT2, CPC, MYB23 and MYB66/WER. Interacts with MYB82. As to expression, mostly expressed in roots and flowers. Also present in stems and leaves, and, to a lower extent, in hypocotyls. Expressed in epidermal root hair cells (trichoblasts) and moves to root hairless cells (atrichoblasts) by a cell-to-cell movement through plasmodesmata (at protein level).

It is found in the nucleus. Its function is as follows. Transcription activator, when associated with MYB75/PAP1, MYB90/PAP2 or TT2. Involved in epidermal cell fate specification. Negatively regulates stomata formation, but, in association with TTG1 and MYB0/GL1, promotes trichome formation, branching and endoreplication. Also regulates trichome cell wall maturation. Together with MYB66/WER, promotes the formation of non-hair cells in root epidermis cells in the N position. Whereas together with CPC, promotes the formation of hair cells in root epidermis cells in the H position by inhibiting non-hair cell formation. Also seems to play a role in the activation of anthocyanin biosynthesis, probably together with MYB75/PAP1. Activates the transcription of GL2. The chain is Transcription factor GLABRA 3 (GL3) from Arabidopsis thaliana (Mouse-ear cress).